The sequence spans 548 residues: Chaperonin GroEL (548 aa).

ATP contacts are provided by residues 30–33 (TLGP), Lys-51, 87–91 (DGTTT), Gly-415, 479–481 (NAA), and Asp-495.

Belongs to the chaperonin (HSP60) family. In terms of assembly, forms a cylinder of 14 subunits composed of two heptameric rings stacked back-to-back. Interacts with the co-chaperonin GroES.

The protein localises to the cytoplasm. The enzyme catalyses ATP + H2O + a folded polypeptide = ADP + phosphate + an unfolded polypeptide.. Its function is as follows. Together with its co-chaperonin GroES, plays an essential role in assisting protein folding. The GroEL-GroES system forms a nano-cage that allows encapsulation of the non-native substrate proteins and provides a physical environment optimized to promote and accelerate protein folding. In Pseudomonas fluorescens (strain Pf0-1), this protein is Chaperonin GroEL.